The chain runs to 227 residues: Ribonuclease 3 (227 aa).

Residues 3 to 130 (TNAISKIIKY…LIGAIYLDGG (128 aa)) enclose the RNase III domain. Glu-43 lines the Mg(2+) pocket. Asp-47 is a catalytic residue. Residues Asn-116 and Glu-119 each coordinate Mg(2+). Glu-119 is a catalytic residue. Residues 155 to 224 (DAKTILQEWA…ASLMLAKINY (70 aa)) form the DRBM domain.

This sequence belongs to the ribonuclease III family. Homodimer. It depends on Mg(2+) as a cofactor.

The protein resides in the cytoplasm. The enzyme catalyses Endonucleolytic cleavage to 5'-phosphomonoester.. Its function is as follows. Digests double-stranded RNA. Involved in the processing of primary rRNA transcript to yield the immediate precursors to the large and small rRNAs (23S and 16S). Processes some mRNAs, and tRNAs when they are encoded in the rRNA operon. Processes pre-crRNA and tracrRNA of type II CRISPR loci if present in the organism. The sequence is that of Ribonuclease 3 from Ehrlichia ruminantium (strain Gardel).